The sequence spans 222 residues: Millepora cytotoxin-1 (222 aa).

The signal sequence occupies residues 1 to 20; that stretch reads MVTLYLHVPILLLVVITARA. Residues 21 to 75 constitute a propeptide that is removed on maturation; sequence APKPDTHNPFDELSSVAEKQDLHYGDRSRKDPFIAQNDVGNNFRDGTQENLTKVR. Intrachain disulfides connect C89-C115, C142-C168, and C179-C222. Repeats lie at residues 100–109, 153–162, and 206–215; these read SIHDNHYEDR, SIHDNYYEDR, and SQHNNYYEDR.

The protein belongs to the dermatopontin family. In terms of processing, is not glycosylated.

It localises to the secreted. The protein localises to the nematocyst. Its function is as follows. Is potently cytotoxic (EC(50) value 79 ng/mL) towards L1210 mouse leukemia cells, has hemagglutination activity on sheep erythrocytes, and is lethal in crayfish. Has no phospholipase A2 activity. The sequence is that of Millepora cytotoxin-1 from Millepora dichotoma (Net fire coral).